A 225-amino-acid polypeptide reads, in one-letter code: uncharacterized protein (225 aa).

The signal sequence occupies residues 1 to 22; sequence MLQHYSVSWKKGLAALCLLAVA. The region spanning 161–190 is the 4Fe-4S ferredoxin-type domain; it reads GNLTAAEEKKTGCLVCLDSCPVGIVSNATY.

This is an uncharacterized protein from Escherichia coli (strain K12).